Here is a 237-residue protein sequence, read N- to C-terminus: Lectin alpha chain (237 aa).

Residues glutamate 8 and aspartate 10 each contribute to the Mn(2+) site. Ca(2+) is bound by residues aspartate 10, tyrosine 12, asparagine 14, and aspartate 19. Positions 12 and 14 each coordinate a carbohydrate. Mn(2+) is bound by residues aspartate 19 and histidine 24. 99–100 lines the a carbohydrate pocket; that stretch reads LY. Aspartate 208 is a Ca(2+) binding site. An a carbohydrate-binding site is contributed by arginine 228.

Belongs to the leguminous lectin family. As to quaternary structure, homodimer and homotetramer. Oligomerization is pH-dependent with homotetramers forming at pH 4 and above.

D-mannose/D-glucose-binding lectin. Has anti-inflammatory activity in animal models when applied intravenously. Has antinociceptive activity in mice when applied intravenously. In Canavalia boliviana, this protein is Lectin alpha chain.